Consider the following 410-residue polypeptide: Interstrand DNA cross-link repair glycosylase (410 aa).

A QXD; important for activity motif is present at residues glutamine 45–aspartate 47.

This sequence belongs to the DNA glycosylase AlkZ-like family.

Functionally, DNA glycosylase involved in the repair of interstrand DNA cross-links (ICLs), which are highly toxic DNA lesions that covalently tether the opposing strands of DNA, thereby inhibiting essential cellular processes such as DNA replication and transcription. Acts by unhooking both sides of the ICLs, forming abasic (AP) sites on both strands. Unhooks ICLs derived from various cross-linking agents, including azinomycin B (AZB) and mechlorethamine, also known as nitrogen mustard (NM), protecting cells from the toxicity of these cross-linking agents. In vitro, also acts on monoadducts and can catalyze the excision of N7-methylguanine (7mGua) from an oligonucleotide containing N7-methyldeoxyguanosine (d7mG). Shows no unhooking activity toward FaPy-ICLs. In Escherichia coli (strain K12), this protein is Interstrand DNA cross-link repair glycosylase (ycaQ).